The primary structure comprises 223 residues: Fibroblast growth factor-binding protein 2 (223 aa).

Residues 1 to 19 (MKFVPCLLLVTLSCLGTLG) form the signal peptide. The segment at 23–45 (RQKQGSTGEEFHFQTGGRDSCTM) is disordered. Cystine bridges form between C43/C63, C72/C106, and C81/C117. A disordered region spans residues 120 to 201 (AGPQAHMQQV…PGGNEEAKKK (82 aa)). Positions 125 to 144 (HMQQVTSSLKGSPEPNQQPE) are enriched in polar residues. Positions 175–186 (AKPTTRPTAKPT) are enriched in low complexity. A disulfide bridge connects residues C206 and C214.

It belongs to the fibroblast growth factor-binding protein family. As to expression, expressed in serum, peripheral leukocytes and cytotoxic T-lymphocytes, but not in granulocytes and monocytes (at protein level).

It is found in the secreted. The protein resides in the extracellular space. This is Fibroblast growth factor-binding protein 2 (FGFBP2) from Homo sapiens (Human).